The chain runs to 382 residues: uncharacterized protein (382 aa).

This is an uncharacterized protein from Frog virus 3 (isolate Goorha) (FV-3).